The following is a 211-amino-acid chain: Protein TMA23 (211 aa).

The segment at 115 to 211 (ASFVVSSASS…SARRDRKEHI (97 aa)) is disordered. A compositionally biased stretch (low complexity) spans 116–125 (SFVVSSASSS). 3 stretches are compositionally biased toward basic residues: residues 140–149 (VKRKKLKKDK), 158–176 (KKKK…KKSK), and 185–197 (SKHK…KKHK). Residues 198 to 211 (KEESSARRDRKEHI) show a composition bias toward basic and acidic residues.

As to quaternary structure, forms homooligomers. Associates with ribosomal complexes.

Its subcellular location is the nucleus. The protein localises to the nucleolus. In terms of biological role, trans-acting factors of the ribosome biogenesis process. This is Protein TMA23 (TMA23) from Saccharomyces cerevisiae (strain ATCC 204508 / S288c) (Baker's yeast).